The following is a 294-amino-acid chain: ATP phosphoribosyltransferase (294 aa).

This sequence belongs to the ATP phosphoribosyltransferase family. Long subfamily. Requires Mg(2+) as cofactor.

The protein resides in the cytoplasm. It carries out the reaction 1-(5-phospho-beta-D-ribosyl)-ATP + diphosphate = 5-phospho-alpha-D-ribose 1-diphosphate + ATP. It functions in the pathway amino-acid biosynthesis; L-histidine biosynthesis; L-histidine from 5-phospho-alpha-D-ribose 1-diphosphate: step 1/9. Feedback inhibited by histidine. Its function is as follows. Catalyzes the condensation of ATP and 5-phosphoribose 1-diphosphate to form N'-(5'-phosphoribosyl)-ATP (PR-ATP). Has a crucial role in the pathway because the rate of histidine biosynthesis seems to be controlled primarily by regulation of HisG enzymatic activity. The chain is ATP phosphoribosyltransferase from Chlorobium luteolum (strain DSM 273 / BCRC 81028 / 2530) (Pelodictyon luteolum).